The primary structure comprises 1366 residues: DNA-directed RNA polymerase subunit beta' (1366 aa).

The span at 1 to 23 (MTSSKPKKSSRVRKTTKNSKKNH) shows a compositional bias: basic residues. The disordered stretch occupies residues 1–37 (MTSSKPKKSSRVRKTTKNSKKNHNTMMPLLPKTPPSF). Positions 248, 315, 322, and 325 each coordinate Zn(2+). The tract at residues 1304–1366 (TAILDDPSDE…LQEEGLLSDG (63 aa)) is disordered. Over residues 1354–1366 (LEGLQEEGLLSDG) the composition is skewed to low complexity.

It belongs to the RNA polymerase beta' chain family. RpoC2 subfamily. In terms of assembly, in cyanobacteria the RNAP catalytic core is composed of 2 alpha, 1 beta, 1 beta', 1 gamma and 1 omega subunit. When a sigma factor is associated with the core the holoenzyme is formed, which can initiate transcription. Zn(2+) serves as cofactor.

It carries out the reaction RNA(n) + a ribonucleoside 5'-triphosphate = RNA(n+1) + diphosphate. DNA-dependent RNA polymerase catalyzes the transcription of DNA into RNA using the four ribonucleoside triphosphates as substrates. The polypeptide is DNA-directed RNA polymerase subunit beta' (Prochlorococcus marinus subsp. pastoris (strain CCMP1986 / NIES-2087 / MED4)).